A 526-amino-acid polypeptide reads, in one-letter code: Histidine-rich glycoprotein (526 aa).

An N-terminal signal peptide occupies residues 1-8; the sequence is ATLQCSWA. 2 Cystatin domains span residues 9-126 and 127-243; these read LTPT…SALA and NTKD…NISG. 6 disulfides stabilise this stretch: cysteine 14/cysteine 505, cysteine 68/cysteine 79, cysteine 95/cysteine 116, cysteine 193/cysteine 415, cysteine 207/cysteine 230, and cysteine 272/cysteine 302. An interaction with ATP5F1A region spans residues 31–74; it reads WRRDGYLFQLLRVADAHLDGAESATVYYLVLDVKETDCSVLSRK. Residues asparagine 115 and asparagine 192 are each glycosylated (N-linked (GlcNAc...) asparagine). An N-linked (GlcNAc...) asparagine glycan is attached at asparagine 240. The tract at residues 243-449 is disordered; sequence GFRPHLGKTP…GKRGPGKGHF (207 aa). Positions 260–269 are enriched in basic residues; it reads DHHHPHKPHK. N-linked (GlcNAc...) asparagine glycosylation occurs at asparagine 310. Over residues 328-346 the composition is skewed to basic residues; the sequence is PPPHGHHPHGPPPHGHHPH. Over residues 347-401 the composition is skewed to pro residues; that stretch reads GPPPHGHPPHGPPPRHPPHGPPPHGHPPHGPPPHGHPPHGPPPHGHPPHGPPPHG. Over residues 408–429 the composition is skewed to basic and acidic residues; sequence GFHDHGPCDPPSHKEGPQDLHQ. Basic residues predominate over residues 438–449; the sequence is HPGKRGPGKGHF. Residue asparagine 485 is glycosylated (N-linked (GlcNAc...) asparagine).

In terms of assembly, interacts with THBS1 (via the TSP type I repeats); the interaction blocks the antiangiogenic effect of THBS1 with CD36. Interacts with THBS2; the interaction blocks the antiangiogenic effect of THBS2 with CD36. Interacts with HPSE; the interaction is enhanced at acidic pH, partially inhibits binding of HPSE to cell surface receptors and modulates its enzymatic activity. Interacts (via the HRR domain) with TMP1; the interaction partially mediates the antiangiogenic properties of HRG. Interacts with kappa and lambda light chains of IgG molecules. Interacts with ATP5F1A; the interaction occurs on the surface of T-cells and alters their cell morphology in concert with CONA. Binds IgG molecules containing kappa and lambda light chains and inhibits the formation of insoluble immunoglobulin complexes. Interacts with F12; the interaction, which is enhanced in the presence of zinc ions and inhibited by heparin-binding to HRG, inhibits factor XII autoactivation and contact-initiated coagulation. Interacts with PLG (via its Kringle domains); the interaction tethers PLG to the cell surface and enhances its activation. Interacts (via the HRR domain) with TPM1; the interaction appears to contribute to the antiangiogenic properties of the HRR domain. Post-translationally, N-glycosylated. In terms of processing, proteolytic cleavage produces several HRG fragments which are mostly disulfide-linked and, therefore, not released. On platelet activation, may release a 33 kDa antiangiogenic peptide which encompasses the HRR.

Its subcellular location is the secreted. Plasma glycoprotein that binds a number of ligands such as heme, heparin, heparan sulfate, thrombospondin, plasminogen, and divalent metal ions. Inhibits rosette formation. Acts as an adapter protein and implicated in regulating many processes such as immune complex and pathogen clearance, cell adhesion, angiogenesis, coagulation and fibrinolysis. Mediates clearance of necrotic cells through enhancing the phagocytosis of necrotic cells in a heparan sulfate-dependent pathway. This process can be regulated by the presence of certain HRG ligands such as heparin and zinc ions. Binds to IgG subclasses of immunoglobins containing kappa and lambda light chains with different affinities regulating their clearance and inhibiting the formation of insoluble immune complexes. Binds T-cells and alters the cell morphology Modulates angiogenesis by blocking the CD6-mediated antiangiongenic effect of thrombospondins, THBS1 and THBS2. Tethers plasminogen to the cell surface. In Oryctolagus cuniculus (Rabbit), this protein is Histidine-rich glycoprotein (HRG).